Here is a 337-residue protein sequence, read N- to C-terminus: GTPase Obg (337 aa).

The Obg domain maps to 1 to 161 (MNLTDNAVIF…FKIKLDFVFL (161 aa)). The 172-residue stretch at 162–333 (ADVGLFGYSN…LINKILLFLE (172 aa)) folds into the OBG-type G domain. GTP-binding positions include 168–175 (GYSNTGRS), 193–197 (FTTLF), 214–217 (DIPS), 282–285 (NKTD), and 314–316 (SLN). Mg(2+)-binding residues include Ser-175 and Thr-195.

Belongs to the TRAFAC class OBG-HflX-like GTPase superfamily. OBG GTPase family. Monomer. Mg(2+) is required as a cofactor.

Its subcellular location is the cytoplasm. Functionally, an essential GTPase which binds GTP, GDP and possibly (p)ppGpp with moderate affinity, with high nucleotide exchange rates and a fairly low GTP hydrolysis rate. Plays a role in control of the cell cycle, stress response, ribosome biogenesis and in those bacteria that undergo differentiation, in morphogenesis control. This Wigglesworthia glossinidia brevipalpis protein is GTPase Obg.